Reading from the N-terminus, the 362-residue chain is Olfactory receptor 5AU1 (362 aa).

Residues Met1 to Phe79 are Extracellular-facing. N-linked (GlcNAc...) asparagine glycosylation is present at Asn56. The helical transmembrane segment at Val80–Ile100 threads the bilayer. Residues His101–Ser116 are Cytoplasmic-facing. A helical membrane pass occupies residues Leu117–Lys139. Residues Arg140–Thr150 lie on the Extracellular side of the membrane. Cys148 and Cys230 are oxidised to a cystine. The chain crosses the membrane as a helical span at residues Gln151–Tyr171. Over Asp172–Ser194 the chain is Cytoplasmic. Residues Leu195–Phe215 traverse the membrane as a helical segment. The Extracellular portion of the chain corresponds to Ser216–Glu247. Residues Ile248 to Ser268 form a helical membrane-spanning segment. Over Tyr269–Ser290 the chain is Cytoplasmic. Residues Thr291–Leu311 traverse the membrane as a helical segment. Residues Arg312–Asp322 lie on the Extracellular side of the membrane. Residues Arg323–Leu343 form a helical membrane-spanning segment. Residues Arg344 to Glu362 are Cytoplasmic-facing.

It belongs to the G-protein coupled receptor 1 family.

It is found in the cell membrane. Odorant receptor. This chain is Olfactory receptor 5AU1 (OR5AU1), found in Homo sapiens (Human).